The primary structure comprises 85 residues: Contulakin-Lt1 (85 aa).

The first 22 residues, 1–22, serve as a signal peptide directing secretion; sequence MRTAYWVMVMMMVGITAPLSEG. Residues 23–60 constitute a propeptide that is removed on maturation; sequence RKLNDAIRGLVADYLTPQLLQSLVSAPYPEFQLDDPNL. A disulfide bridge links cysteine 65 with cysteine 70. Residues 76–85 constitute a propeptide that is removed on maturation; it reads RRRDLKKRNK.

This sequence belongs to the conotoxin C superfamily. Expressed by the venom duct.

It is found in the secreted. Acts as an agonist of neurotensin receptors. It binds to human neurotensin type 1 receptor (NTSR1), rat neurotensin types 1 and 2 receptors (NTSR1/NTSR2) and mouse neurotensin type 3 receptor (SORT1). The chain is Contulakin-Lt1 from Conus litteratus (Lettered cone).